We begin with the raw amino-acid sequence, 513 residues long: Aromatic amino acid aminotransferase 2 (513 aa).

Phosphoserine is present on residues Ser-90 and Ser-92. Pyridoxal 5'-phosphate is bound by residues Tyr-102, 143–144, Asn-232, Tyr-263, and 314–316; these read SN and TFS. Asn-232 provides a ligand contact to substrate. N6-(pyridoxal phosphate)lysine is present on Lys-317. Arg-324 is a pyridoxal 5'-phosphate binding site. Arg-481 contributes to the substrate binding site.

It belongs to the class-I pyridoxal-phosphate-dependent aminotransferase family. Pyridoxal 5'-phosphate is required as a cofactor.

It localises to the cytoplasm. It catalyses the reaction an aromatic L-alpha-amino acid + 2-oxoglutarate = an aromatic oxo-acid + L-glutamate. The catalysed reaction is an aromatic L-alpha-amino acid + 4-methylsulfanyl-2-oxobutanoate = an aromatic oxo-acid + L-methionine. The enzyme catalyses L-kynurenine + 2-oxoglutarate = kynurenate + L-glutamate + H2O. Its pathway is amino-acid biosynthesis; L-methionine biosynthesis via salvage pathway; L-methionine from S-methyl-5-thio-alpha-D-ribose 1-phosphate: step 6/6. The protein operates within amino-acid degradation; L-kynurenine degradation; kynurenate from L-kynurenine: step 1/2. General aromatic amino acid transaminase involved in several otherwise unrelated metabolic pathways. Mainly involved in tryptophan degradation. Active with phenylalanine, tyrosine and tryptophan as amino donors and with phenylpyruvate, hydroxyphenylpyruvate and pyruvate as amino acceptors. Does not accept glutamate or 2-oxoglutarate as substrates. Also active with methionine, leucine, glutamine and kynurenine. Catalyzes the formation of methionine from 2-keto-4-methylthiobutyrate (KMTB) in the methionine salvage pathway primarily using aromatic amino acids (tyrosine, phenylalanine and tryptophan) as the amino donors. Catalyzes the irreversible transamination of the L-tryptophan metabolite L-kynurenine to form kynurenic acid (KA) with pyruvate as amino acceptor. This is Aromatic amino acid aminotransferase 2 from Saccharomyces cerevisiae (strain ATCC 204508 / S288c) (Baker's yeast).